The following is a 1556-amino-acid chain: Pentafunctional AROM polypeptide (1556 aa).

The tract at residues 1 to 387 (MFAEGQIQKV…HEQKASSVAD (387 aa)) is 3-dehydroquinate synthase. Residues 46–48 (DTN), 84–87 (ETSK), 115–117 (GGV), and D120 contribute to the NAD(+) site. 7-phospho-2-dehydro-3-deoxy-D-arabino-heptonate is bound at residue R131. 140 to 141 (TT) is a binding site for NAD(+). 7-phospho-2-dehydro-3-deoxy-D-arabino-heptonate contacts are provided by D147 and K153. K162 is a binding site for NAD(+). 7-phospho-2-dehydro-3-deoxy-D-arabino-heptonate is bound at residue N163. NAD(+) is bound by residues 180–183 (FLET) and N191. E195 contacts Zn(2+). 7-phospho-2-dehydro-3-deoxy-D-arabino-heptonate contacts are provided by residues 195-198 (EVIK) and K253. The Proton acceptor; for 3-dehydroquinate synthase activity role is filled by E263. Residues 267–271 (RNLLN) and H274 each bind 7-phospho-2-dehydro-3-deoxy-D-arabino-heptonate. H274 contributes to the Zn(2+) binding site. The active-site Proton acceptor; for 3-dehydroquinate synthase activity is H278. The 7-phospho-2-dehydro-3-deoxy-D-arabino-heptonate site is built by H290 and K359. Residue H290 coordinates Zn(2+). Positions 400–837 (VGEAPVGDKK…WDVLSGVFNV (438 aa)) are EPSP synthase. C819 functions as the For EPSP synthase activity in the catalytic mechanism. The shikimate kinase stretch occupies residues 858–1049 (PSIFIVGMRG…HKDQFTSFLS (192 aa)). 864–871 (GMRGAGKT) contacts ATP. A 3-dehydroquinase region spans residues 1050 to 1266 (LTFPDVSIAA…AAPGQLSVEE (217 aa)). Residue H1171 is the Proton acceptor; for 3-dehydroquinate dehydratase activity of the active site. Residue K1200 is the Schiff-base intermediate with substrate; for 3-dehydroquinate dehydratase activity of the active site. A shikimate dehydrogenase region spans residues 1279 to 1556 (KNLSFFIVGT…EVGEKAVLGN (278 aa)).

It in the N-terminal section; belongs to the sugar phosphate cyclases superfamily. Dehydroquinate synthase family. The protein in the 2nd section; belongs to the EPSP synthase family. In the 3rd section; belongs to the shikimate kinase family. This sequence in the 4th section; belongs to the type-I 3-dehydroquinase family. It in the C-terminal section; belongs to the shikimate dehydrogenase family. Homodimer. The cofactor is Zn(2+).

Its subcellular location is the cytoplasm. The enzyme catalyses 7-phospho-2-dehydro-3-deoxy-D-arabino-heptonate = 3-dehydroquinate + phosphate. It catalyses the reaction 3-dehydroquinate = 3-dehydroshikimate + H2O. It carries out the reaction shikimate + NADP(+) = 3-dehydroshikimate + NADPH + H(+). The catalysed reaction is shikimate + ATP = 3-phosphoshikimate + ADP + H(+). The enzyme catalyses 3-phosphoshikimate + phosphoenolpyruvate = 5-O-(1-carboxyvinyl)-3-phosphoshikimate + phosphate. It participates in metabolic intermediate biosynthesis; chorismate biosynthesis; chorismate from D-erythrose 4-phosphate and phosphoenolpyruvate: step 2/7. The protein operates within metabolic intermediate biosynthesis; chorismate biosynthesis; chorismate from D-erythrose 4-phosphate and phosphoenolpyruvate: step 3/7. Its pathway is metabolic intermediate biosynthesis; chorismate biosynthesis; chorismate from D-erythrose 4-phosphate and phosphoenolpyruvate: step 4/7. It functions in the pathway metabolic intermediate biosynthesis; chorismate biosynthesis; chorismate from D-erythrose 4-phosphate and phosphoenolpyruvate: step 5/7. It participates in metabolic intermediate biosynthesis; chorismate biosynthesis; chorismate from D-erythrose 4-phosphate and phosphoenolpyruvate: step 6/7. Its function is as follows. The AROM polypeptide catalyzes 5 consecutive enzymatic reactions in prechorismate polyaromatic amino acid biosynthesis. The chain is Pentafunctional AROM polypeptide from Yarrowia lipolytica (strain CLIB 122 / E 150) (Yeast).